The sequence spans 181 residues: Ribosome maturation factor RimP (181 aa).

It belongs to the RimP family.

It localises to the cytoplasm. Required for maturation of 30S ribosomal subunits. The protein is Ribosome maturation factor RimP of Sphingopyxis alaskensis (strain DSM 13593 / LMG 18877 / RB2256) (Sphingomonas alaskensis).